Reading from the N-terminus, the 193-residue chain is Interleukin-18 (193 aa).

Positions 1–36 (MAAEQVEDYCISFVEMKFINNTLYFVAENDEDLESD) are excised as a propeptide.

The protein belongs to the IL-1 family. Forms a ternary complex with ligand-binding receptor subunit IL18R1 and signaling receptor subunit IL18RAP at the plasma membrane. Mature IL18 first binds to IL18R1 forming a low affinity binary complex, which then interacts with IL18RAP to form a high affinity ternary complex that signals inside the cell. Interacts with cargo receptor TMED10; the interaction mediates the translocation from the cytoplasm into the ERGIC (endoplasmic reticulum-Golgi intermediate compartment) and thereby secretion. Post-translationally, the pro-IL-18 precursor is processed by CASP1, CASP4 or CASP5 to yield its mature, active form. The pro-IL-18 precursor features autoinhibitory interactions between the propeptide and the post-cleavage-site region, preventing recognition by the IL18R1 receptor. Processing by CASP1, CASP4 or CASP5 induces conformational changes to generate critical receptor-binding sites. The mature form is then secreted and released in the extracellular milieu by passing through the gasdermin-D (GSDMD) pore. In contrast, cleavage by CASP3 inactivates IL18.

The protein localises to the cytoplasm. The protein resides in the cytosol. Its subcellular location is the secreted. Pro-inflammatory cytokine primarily involved in epithelial barrier repair, polarized T-helper 1 (Th1) cell and natural killer (NK) cell immune responses. Upon binding to IL18R1 and IL18RAP, forms a signaling ternary complex which activates NF-kappa-B, triggering synthesis of inflammatory mediators. Synergizes with IL12/interleukin-12 to induce IFNG synthesis from T-helper 1 (Th1) cells and natural killer (NK) cells. Involved in transduction of inflammation downstream of pyroptosis: its mature form is specifically released in the extracellular milieu by passing through the gasdermin-D (GSDMD) pore. The sequence is that of Interleukin-18 (IL18) from Bos taurus (Bovine).